The primary structure comprises 73 residues: U-scoloptoxin(15)-Sm3a (73 aa).

Positions 1–23 (MERKVFLLLFVIVLLTLPGFMSA) are cleaved as a signal peptide.

It belongs to the scoloptoxin-15 family. Contains 2 disulfide bonds. Expressed by the venom gland.

It is found in the secreted. The chain is U-scoloptoxin(15)-Sm3a from Scolopendra morsitans (Tanzanian blue ringleg centipede).